Here is a 360-residue protein sequence, read N- to C-terminus: Protein Wnt-2 (360 aa).

An N-terminal signal peptide occupies residues 1–25 (MNAPLGGIWLWLPLLLTWLTPEVSS). Intrachain disulfides connect cysteine 76/cysteine 87, cysteine 127/cysteine 135, cysteine 137/cysteine 157, cysteine 206/cysteine 220, cysteine 208/cysteine 215, cysteine 278/cysteine 309, cysteine 294/cysteine 304, cysteine 308/cysteine 348, cysteine 324/cysteine 339, cysteine 326/cysteine 336, and cysteine 331/cysteine 332. Serine 212 is lipidated: O-palmitoleoyl serine; by PORCN. Residue asparagine 295 is glycosylated (N-linked (GlcNAc...) asparagine).

This sequence belongs to the Wnt family. In terms of processing, palmitoleoylation is required for efficient binding to frizzled receptors. Depalmitoleoylation leads to Wnt signaling pathway inhibition.

The protein resides in the secreted. It localises to the extracellular space. The protein localises to the extracellular matrix. Functionally, ligand for members of the frizzled family of seven transmembrane receptors. Functions in the canonical Wnt signaling pathway that results in activation of transcription factors of the TCF/LEF family. Functions as a upstream regulator of FGF10 expression. Plays an important role in embryonic lung development. May contribute to embryonic brain development by regulating the proliferation of dopaminergic precursors and neurons. The chain is Protein Wnt-2 (WNT2) from Equus caballus (Horse).